Reading from the N-terminus, the 177-residue chain is Large ribosomal subunit protein uL6 (177 aa).

This sequence belongs to the universal ribosomal protein uL6 family. As to quaternary structure, part of the 50S ribosomal subunit.

Functionally, this protein binds to the 23S rRNA, and is important in its secondary structure. It is located near the subunit interface in the base of the L7/L12 stalk, and near the tRNA binding site of the peptidyltransferase center. The sequence is that of Large ribosomal subunit protein uL6 from Pseudomonas putida (strain ATCC 700007 / DSM 6899 / JCM 31910 / BCRC 17059 / LMG 24140 / F1).